The chain runs to 1633 residues: MVVCVLSGKVCYLSYNVTRVSDDQAAHVAATFETVAKCIADAPHRLIQEVEVLSQLDVDRLKTWNAYQPIAVETCYQDLFRQRCDLHPDSPAVVAWDGSFTYDELDHFSSLLATRLQAAGIGPDVFVTICATRCRWIPVAMLGIIKARGAFCALDLSHPLDRLKDICDALKSTITITTPTDSNIARKLASTVIVIGGDAPVESDRITPMNDRPKPTNGHPRNALYSVFTSGSSGKPKGVVVEHRSFVSSALASIQPLDIRPHDRLLHFSAYAFDISVFEVLTPLISGATIAIPSEKRRKESLTHAVQELGATWALLTPTVARLYDPDEFPSLRTLALGGELAQTSDIALWQSKNVVIIYNPAECCPIGVSGPACPADGRFLGRSHTCQRAWIVDPRDHDKLLPIGAVGELLIEGPVVARCYAHDPNFSSPDSPFIQSTPSWMLRLRSNTSSGTRLYRTGDLARYGSDASLYYMGRKDSQIKIRGQRTEPGEIESNLHSILSKDKLGVAIVVLELRGSSKIIAFVSKDTGGLGGDSNTVGQLRIEAATEETDMCIIKATSKLHRIMPAYMVPSAFLSVNYIPISRSGKIDRTRLKSFALSLPQETLLRVNNGLETGDLPESNEEHRLQRMYSLVLGISRDKIGMESDFFRLGGDSLQAMKLLALAPKEGLTDISYEDIFRYPRLKDLARKASQSVTIKKDGFGENSSVIHPFSLVIDGQSLIDMAAKQCNIERDSIEDIYPCTPMQASIMSLAVKGKIVSFLTFGLALRDHVDTKRVKDTWHAAYRANSLLRTRIIVCAETGQLYQVVVGGDIFWDDDECGNFAQPESGPSASIGGPLVRMKLVEGQLSIAIHRALYDNWSIRQLLNDISGAYNGLPLPSRPSFNCYVSYAAKSLEAASSFWSAELGDADLDAAKYPEPVSQNSHTNSRAWLGIRVVTCQKESIDVLASEFRLAWAMITYARTNKKDVVFGVLSSGRSNASKDTKEIMGPIATVTPLRVTIDGTQDVGGALEELQYRQEEQAMYTHLGLRRIGQLGRNAAAACQIQTVLIVEPDLPDLRGVWFSNDATLPNHSDADASNYRLTIKCVVGPDCTDIFAIFDHQSLPIMEVKEILSQFEHILGQIHGKEASQLSVASIDTANFKDWDTLHKSTEMPSVCRNGLLLSDPTFLPHDQMKTFPAIEEAAAHCVFQDSLQEASIARDAKMQPKEPLSSADLISEINRYDLAXXRSRPSPESILLSELALTGESHSSGTHTVFVTGASGFIGTQILRHCLEDPRIDHVIALVRGSSANEARSRTEESARRAQWWSDCHSQKLEVWPGDLAMPHLGLNETHWRRLADRTTINAIIHNGASVHWLKRYADLEATNVGATAQLLQLAVANPRLGFVYVSSGRYTDPNAEAEEPAAANVAATAMPYSQTKFVAESPIRRTAARLPHGQTQVRIISLGLVIGDPLTGVVNADDYLWRLIATCVQAGEYNSSAGSEWMPISDVTSTALAIVQTALNPAGVPATIKPITGGLMWSEIWDLVTDMGYDMEPRPESEWMATVRRDLKREQEKHPLWTLSHLVESRSQLNTDAGAGSAWADAWRGDEATTRNLRTAFRRSLRFLGEVGFLPGQKGRNTDGEVNGRAFRRAW.

Residues 80-483 (FRQRCDLHPD…GRKDSQIKIR (404 aa)) are adenylation (A) domain. One can recognise a Carrier domain in the interval 622 to 691 (EEHRLQRMYS…RLKDLARKAS (70 aa)). S654 carries the post-translational modification O-(pantetheine 4'-phosphoryl)serine. Residues 836-1127 (PLVRMKLVEG…ILGQIHGKEA (292 aa)) form a condensation (C) domain region. The segment at 1256-1483 (VTGASGFIGT…EYNSSAGSEW (228 aa)) is reductase (R) domain.

This sequence belongs to the NRP synthetase family.

It participates in alkaloid biosynthesis; ergot alkaloid biosynthesis. In terms of biological role, D-lysergyl-peptide-synthetase subunit 3; part of the gene cluster that mediates the biosynthesis of fungal ergot alkaloid. DmaW catalyzes the first step of ergot alkaloid biosynthesis by condensing dimethylallyl diphosphate (DMAP) and tryptophan to form 4-dimethylallyl-L-tryptophan. The second step is catalyzed by the methyltransferase easF that methylates 4-dimethylallyl-L-tryptophan in the presence of S-adenosyl-L-methionine, resulting in the formation of 4-dimethylallyl-L-abrine. The catalase easC and the FAD-dependent oxidoreductase easE then transform 4-dimethylallyl-L-abrine to chanoclavine-I which is further oxidized by easD in the presence of NAD(+), resulting in the formation of chanoclavine-I aldehyde. Agroclavine dehydrogenase easG then mediates the conversion of chanoclavine-I aldehyde to agroclavine via a non-enzymatic adduct reaction: the substrate is an iminium intermediate that is formed spontaneously from chanoclavine-I aldehyde in the presence of glutathione. The presence of easA is not required to complete this reaction. Further conversion of agroclavine to paspalic acid is a two-step process involving oxidation of agroclavine to elymoclavine and of elymoclavine to paspalic acid, the second step being performed by the elymoclavine oxidase cloA. Paspalic acid is then further converted to D-lysergic acid. Ergopeptines are assembled from D-lysergic acid and three different amino acids by the D-lysergyl-peptide-synthetases composed each of a monomudular and a trimodular nonribosomal peptide synthetase subunit. LpsB and lpsC encode the monomodular subunits responsible for D-lysergic acid activation and incorporation into the ergopeptine backbone. LpsA1 and A2 subunits encode the trimodular nonribosomal peptide synthetase assembling the tripeptide portion of ergopeptines. LpsA1 is responsible for formation of the major ergopeptine, ergotamine, and lpsA2 for alpha-ergocryptine, the minor ergopeptine of the total alkaloid mixture elaborated by C.purpurea. D-lysergyl-tripeptides are assembled by the nonribosomal peptide synthetases and released as N-(D-lysergyl-aminoacyl)-lactams. Cyclolization of the D-lysergyl-tripeptides is performed by the Fe(2+)/2-ketoglutarate-dependent dioxygenase easH which introduces a hydroxyl group into N-(D-lysergyl-aminoacyl)-lactam at alpha-C of the aminoacyl residue followed by spontaneous condensation with the terminal lactam carbonyl group. This chain is D-lysergyl-peptide-synthetase subunit 3, found in Claviceps purpurea (Ergot fungus).